We begin with the raw amino-acid sequence, 871 residues long: DNA mismatch repair protein MutS (871 aa).

ATP is bound at residue 605 to 612 (GPNMGGKS). The tract at residues 791–840 (PQRPTSASVEQPVDSAKTETAATAEEPQQLSLFPTDEETKPKQPTKKERS) is disordered. The span at 827-840 (EETKPKQPTKKERS) shows a compositional bias: basic and acidic residues.

Belongs to the DNA mismatch repair MutS family.

In terms of biological role, this protein is involved in the repair of mismatches in DNA. It is possible that it carries out the mismatch recognition step. This protein has a weak ATPase activity. The sequence is that of DNA mismatch repair protein MutS from Shouchella clausii (strain KSM-K16) (Alkalihalobacillus clausii).